The chain runs to 1357 residues: DNA-directed RNA polymerase subunit beta (1357 aa).

Belongs to the RNA polymerase beta chain family. In terms of assembly, the RNAP catalytic core consists of 2 alpha, 1 beta, 1 beta' and 1 omega subunit. When a sigma factor is associated with the core the holoenzyme is formed, which can initiate transcription.

It catalyses the reaction RNA(n) + a ribonucleoside 5'-triphosphate = RNA(n+1) + diphosphate. Its function is as follows. DNA-dependent RNA polymerase catalyzes the transcription of DNA into RNA using the four ribonucleoside triphosphates as substrates. In Ectopseudomonas mendocina (strain ymp) (Pseudomonas mendocina), this protein is DNA-directed RNA polymerase subunit beta.